The chain runs to 141 residues: MRHGKSGRKLNRTTSHRKAMFANMAASLIEHEQIVTTLPKAKEIRPIVEKLVTLGKRGDLHARRQAIAAIRDTEKVAKLFSALAPRYESRHGGYLRIMKAGFRTGDNAPMAVVEFVDRDVNAKGATDHERKVAKVTEKEDS.

Belongs to the bacterial ribosomal protein bL17 family. As to quaternary structure, part of the 50S ribosomal subunit. Contacts protein L32.

This is Large ribosomal subunit protein bL17 from Bartonella bacilliformis (strain ATCC 35685 / KC583 / Herrer 020/F12,63).